A 266-amino-acid polypeptide reads, in one-letter code: Signal peptidase I (266 aa).

At 1–20 (MQTDNTKSNTNKTAKQEWGS) the chain is on the cytoplasmic side. A helical membrane pass occupies residues 21-41 (FAFVICIALLIRILIMEPFTV). Residues 42–266 (PTGSMKATIL…IFRNLYNTDA (225 aa)) lie on the Periplasmic side of the membrane. Catalysis depends on residues Ser-45 and Lys-108.

It belongs to the peptidase S26 family.

It is found in the cell inner membrane. It carries out the reaction Cleavage of hydrophobic, N-terminal signal or leader sequences from secreted and periplasmic proteins.. Complements E.coli mutants temperature-sensitive for LepB function. The chain is Signal peptidase I (lepB) from Rickettsia rickettsii (strain Sheila Smith).